A 349-amino-acid polypeptide reads, in one-letter code: AdoMet-dependent heme synthase (349 aa).

In terms of domain architecture, Radical SAM core spans T5–E214. The [4Fe-4S] cluster site is built by C19, C23, and C26.

This sequence belongs to the radical SAM superfamily. It depends on [4Fe-4S] cluster as a cofactor.

It catalyses the reaction Fe-coproporphyrin III + 2 S-adenosyl-L-methionine = heme b + 2 5'-deoxyadenosine + 2 L-methionine + 2 CO2. It participates in porphyrin-containing compound metabolism; protoheme biosynthesis. In terms of biological role, involved in siroheme-dependent heme b biosynthesis. Catalyzes the conversion of Fe-coproporphyrin III into heme by the oxidative decarboxylation of two propionate side chains. The polypeptide is AdoMet-dependent heme synthase (Methanosarcina barkeri (strain Fusaro / DSM 804)).